A 314-amino-acid polypeptide reads, in one-letter code: 4-hydroxy-3-methylbut-2-enyl diphosphate reductase (314 aa).

Cys12 is a binding site for [4Fe-4S] cluster. (2E)-4-hydroxy-3-methylbut-2-enyl diphosphate contacts are provided by His43 and His81. Dimethylallyl diphosphate-binding residues include His43 and His81. 2 residues coordinate isopentenyl diphosphate: His43 and His81. Cys103 contacts [4Fe-4S] cluster. His131 provides a ligand contact to (2E)-4-hydroxy-3-methylbut-2-enyl diphosphate. A dimethylallyl diphosphate-binding site is contributed by His131. His131 contacts isopentenyl diphosphate. Catalysis depends on Glu133, which acts as the Proton donor. Thr170 is a (2E)-4-hydroxy-3-methylbut-2-enyl diphosphate binding site. Residue Cys198 coordinates [4Fe-4S] cluster. The (2E)-4-hydroxy-3-methylbut-2-enyl diphosphate site is built by Ser226, Asn228, and Ser271. 3 residues coordinate dimethylallyl diphosphate: Ser226, Asn228, and Ser271. Isopentenyl diphosphate-binding residues include Ser226, Asn228, and Ser271.

This sequence belongs to the IspH family. [4Fe-4S] cluster is required as a cofactor.

It carries out the reaction isopentenyl diphosphate + 2 oxidized [2Fe-2S]-[ferredoxin] + H2O = (2E)-4-hydroxy-3-methylbut-2-enyl diphosphate + 2 reduced [2Fe-2S]-[ferredoxin] + 2 H(+). The enzyme catalyses dimethylallyl diphosphate + 2 oxidized [2Fe-2S]-[ferredoxin] + H2O = (2E)-4-hydroxy-3-methylbut-2-enyl diphosphate + 2 reduced [2Fe-2S]-[ferredoxin] + 2 H(+). It functions in the pathway isoprenoid biosynthesis; dimethylallyl diphosphate biosynthesis; dimethylallyl diphosphate from (2E)-4-hydroxy-3-methylbutenyl diphosphate: step 1/1. The protein operates within isoprenoid biosynthesis; isopentenyl diphosphate biosynthesis via DXP pathway; isopentenyl diphosphate from 1-deoxy-D-xylulose 5-phosphate: step 6/6. In terms of biological role, catalyzes the conversion of 1-hydroxy-2-methyl-2-(E)-butenyl 4-diphosphate (HMBPP) into a mixture of isopentenyl diphosphate (IPP) and dimethylallyl diphosphate (DMAPP). Acts in the terminal step of the DOXP/MEP pathway for isoprenoid precursor biosynthesis. This Bacillus subtilis (strain 168) protein is 4-hydroxy-3-methylbut-2-enyl diphosphate reductase.